A 140-amino-acid chain; its full sequence is Ribosome maturation factor RimP (140 aa).

The protein belongs to the RimP family.

Its subcellular location is the cytoplasm. Required for maturation of 30S ribosomal subunits. In Campylobacter jejuni subsp. doylei (strain ATCC BAA-1458 / RM4099 / 269.97), this protein is Ribosome maturation factor RimP.